The primary structure comprises 424 residues: GTPase Obg (424 aa).

One can recognise an Obg domain in the interval 1-158; it reads MFVDKARIFV…RWISLELKLL (158 aa). One can recognise an OBG-type G domain in the interval 159–331; sequence ADVGLIGFPN…LLKECARVLS (173 aa). Residues 165–172, 190–194, 212–215, 282–285, and 312–314 contribute to the GTP site; these read GFPNVGKS, FTTIT, DIPG, NKAD, and SAA. Mg(2+)-binding residues include Ser-172 and Thr-192. An OCT domain is found at 345-424; the sequence is RFVPEDKHFT…LNDFEFEFLK (80 aa).

The protein belongs to the TRAFAC class OBG-HflX-like GTPase superfamily. OBG GTPase family. In terms of assembly, monomer. It depends on Mg(2+) as a cofactor.

Its subcellular location is the cytoplasm. An essential GTPase which binds GTP, GDP and possibly (p)ppGpp with moderate affinity, with high nucleotide exchange rates and a fairly low GTP hydrolysis rate. Plays a role in control of the cell cycle, stress response, ribosome biogenesis and in those bacteria that undergo differentiation, in morphogenesis control. This chain is GTPase Obg, found in Clostridium acetobutylicum (strain ATCC 824 / DSM 792 / JCM 1419 / IAM 19013 / LMG 5710 / NBRC 13948 / NRRL B-527 / VKM B-1787 / 2291 / W).